A 1105-amino-acid polypeptide reads, in one-letter code: AP-3 complex subunit beta-1 (1105 aa).

2 disordered regions span residues 1–26 (MSSN…EATS) and 271–292 (KNFY…KKSY). Serine 276 and serine 610 each carry phosphoserine. Residues 668–824 (KKEKPMKKFY…KPQQERHPPS (157 aa)) form a disordered region. A compositionally biased stretch (acidic residues) spans 679 to 704 (ESEEEEDEDEDEDEEEEEKEDEDENP). 2 stretches are compositionally biased toward low complexity: residues 705–722 (SDSS…SGDT) and 730–741 (DSSSGQDSETGS). The segment covering 750-759 (VAKRNSKTKR) has biased composition (basic residues). The span at 760 to 774 (KSDSENREKKNENSK) shows a compositional bias: basic and acidic residues. 2 positions are modified to phosphoserine: serine 761 and serine 763. Residues 775 to 788 (ASESSSEESSSMED) are compositionally biased toward low complexity. Residues 789–799 (SSSESESESGS) are compositionally biased toward acidic residues. Positions 811 to 824 (AKERKPQQERHPPS) are enriched in basic and acidic residues.

The protein belongs to the adaptor complexes large subunit family. Adaptor protein complex 3 (AP-3) is a heterotetramer composed of two large adaptins (delta-type subunit AP3D1 and beta-type subunit AP3B1 or AP3B2), a medium adaptin (mu-type subunit AP3M1 or AP3M2) and a small adaptin (sigma-type subunit APS1 or AP3S2). AP-3 associates with the BLOC-1 complex. Interacts with KIF3A; interaction is direct; interaction is impaired by pyrophosphorylation of AP3B1. In terms of processing, phosphorylated on serine residues. Post-translationally, pyrophosphorylated by 5-diphosphoinositol pentakisphosphate (5-IP7). Pyrophosphorylation impairs interaction with KIF3A. Serine pyrophosphorylation is achieved by Mg(2+)-dependent, but enzyme independent transfer of a beta-phosphate from a inositol pyrophosphate to a pre-phosphorylated serine residue. In terms of tissue distribution, ubiquitously expressed.

The protein localises to the cytoplasmic vesicle. It is found in the clathrin-coated vesicle membrane. It localises to the golgi apparatus. Subunit of non-clathrin- and clathrin-associated adaptor protein complex 3 (AP-3) that plays a role in protein sorting in the late-Golgi/trans-Golgi network (TGN) and/or endosomes. The AP complexes mediate both the recruitment of clathrin to membranes and the recognition of sorting signals within the cytosolic tails of transmembrane cargo molecules. AP-3 appears to be involved in the sorting of a subset of transmembrane proteins targeted to lysosomes and lysosome-related organelles. In concert with the BLOC-1 complex, AP-3 is required to target cargos into vesicles assembled at cell bodies for delivery into neurites and nerve terminals. The protein is AP-3 complex subunit beta-1 (Ap3b1) of Mus musculus (Mouse).